The sequence spans 761 residues: Subtilisin-like protease SBT3 (761 aa).

A signal peptide spans 1–22 (MELLHLLLFSWALSAHLFLALA). Residues 23–112 (QRSTYIVHLD…AYKDRTVEPH (90 aa)) constitute a propeptide that is removed on maturation. The Inhibitor I9 domain maps to 26-110 (TYIVHLDKSL…ISAYKDRTVE (85 aa)). Positions 116-606 (TSDFLKLNPS…AGHVDPNRAL (491 aa)) constitute a Peptidase S8 domain. Residue Asp144 is the Charge relay system of the active site. Cysteines 170 and 181 form a disulfide. 2 N-linked (GlcNAc...) (complex) asparagine; alternate glycosylation sites follow: Asn177 and Asn203. N-linked (GlcNAc...) (paucimannose) asparagine; alternate glycosylation is found at Asn177 and Asn203. His215 serves as the catalytic Charge relay system. N-linked (GlcNAc...) (paucimannose) asparagine; partial glycosylation occurs at Asn376. Cys382 and Cys401 are joined by a disulfide. Residue Ser538 is the Charge relay system of the active site. The disordered stretch occupies residues 574–598 (LDNTRKPIKDSDNNKAATPLDMGAG). Residues 575-586 (DNTRKPIKDSDN) show a composition bias toward basic and acidic residues. A disulfide bond links Cys624 and Cys645. N-linked (GlcNAc...) (complex) asparagine; alternate glycans are attached at residues Asn697 and Asn745. 2 N-linked (GlcNAc...) (paucimannose) asparagine; alternate glycosylation sites follow: Asn697 and Asn745. The interval 756–761 (PIIEVW) is necessary for prodomain cleavage and secretion.

This sequence belongs to the peptidase S8 family. As to quaternary structure, homodimer. In terms of processing, propeptide is internally cleaved at Asn-38 and Asp-52 in a pH-dependent manner leading to the dissociation of the propeptide from the catalytic domain and resulting in the release of the active subtilase. Cleavage occurs at pH 5.7 and to a stronger extent at pH 5.2. Expressed in flowers, cotyledons and leaves with the highest expression in roots.

It localises to the secreted. With respect to regulation, inhibited by 1 mM 4-(2-aminoethyl)-benzenesulfonyl fluoride (AEBSF), a general inhibitor of serine proteinases, but not by the more selective serine protease inhibitors N-alpha-tosyl-L-lysinyl-chloromethylketone (TLCK), N-tosyl-L-phenylalaninyl-chloromethylketone (TPCK), leupeptin, aprotinin or benzamidine. Its proteolytic activity is autoinhibited by the non-covalent binding of the propeptide to the catalytic domain. No effect on activity by the addition of CaCl(2) or calcium chelators. Functionally, serine protease. Has preference for Gln in the P1 position and Lys in the P2 position of oligopeptide substrates. Active also with His in the P1 position. Involved in resistance against insects partly by regulating expression of systemic wound response genes and possibly by its post-ingestive activity in the insect gut. Apart from the role in defense, may be involved in regulation of pectin methylesterases (PMEs) activity and pectin methylesterification of the cell wall. The polypeptide is Subtilisin-like protease SBT3 (Solanum lycopersicum (Tomato)).